The chain runs to 137 residues: Holo-[acyl-carrier-protein] synthase (137 aa).

Residues D8 and E57 each coordinate Mg(2+).

Belongs to the P-Pant transferase superfamily. AcpS family. The cofactor is Mg(2+).

It is found in the cytoplasm. The enzyme catalyses apo-[ACP] + CoA = holo-[ACP] + adenosine 3',5'-bisphosphate + H(+). Functionally, transfers the 4'-phosphopantetheine moiety from coenzyme A to a Ser of acyl-carrier-protein. In Mesorhizobium japonicum (strain LMG 29417 / CECT 9101 / MAFF 303099) (Mesorhizobium loti (strain MAFF 303099)), this protein is Holo-[acyl-carrier-protein] synthase.